Reading from the N-terminus, the 215-residue chain is uncharacterized protein (215 aa).

The disordered stretch occupies residues 120-147 (HRAPQGTSSYQEGRRAHEATSAESDDDN).

This is an uncharacterized protein from Homo sapiens (Human).